Here is a 288-residue protein sequence, read N- to C-terminus: Protein sprouty homolog 3 (288 aa).

The 114-residue stretch at 154–267 (KCVPCTAVRP…PGCRCKRHTN (114 aa)) folds into the SPR domain.

This sequence belongs to the sprouty family. Interacts with TESK1. Interacts with USP11. Interacts with CAV1 (via C-terminus). Expressed in the brain with expression the highest in Purkinje cell bodies and projections in the cerebellum (at protein level). Also expressed in central and peripheral nervous system ganglion cells, superior cervical ganglion and dorsal root ganglion (at protein level). Expressed in the retinal ganglion cell layer and the inner nuclear layer (at protein level).

It is found in the cytoplasm. In terms of biological role, inhibits neurite branching, arbor length and neurite complexity. Inhibits EGF-mediated p42/44 ERK signaling. Negatively regulates the MAPK cascade, resulting in a reduction of extracellular matrix protein accumulation. May function as an antagonist of fibroblast growth factor (FGF) pathways and may negatively modulate respiratory organogenesis. This chain is Protein sprouty homolog 3, found in Mus musculus (Mouse).